A 179-amino-acid chain; its full sequence is uncharacterized protein (179 aa).

This is an uncharacterized protein from Bacillus subtilis (strain 168).